We begin with the raw amino-acid sequence, 316 residues long: Methionyl-tRNA formyltransferase (316 aa).

(6S)-5,6,7,8-tetrahydrofolate is bound at residue 111–114 (SLLP).

The protein belongs to the Fmt family.

It catalyses the reaction L-methionyl-tRNA(fMet) + (6R)-10-formyltetrahydrofolate = N-formyl-L-methionyl-tRNA(fMet) + (6S)-5,6,7,8-tetrahydrofolate + H(+). Its function is as follows. Attaches a formyl group to the free amino group of methionyl-tRNA(fMet). The formyl group appears to play a dual role in the initiator identity of N-formylmethionyl-tRNA by promoting its recognition by IF2 and preventing the misappropriation of this tRNA by the elongation apparatus. This Limosilactobacillus fermentum (strain NBRC 3956 / LMG 18251) (Lactobacillus fermentum) protein is Methionyl-tRNA formyltransferase.